A 388-amino-acid chain; its full sequence is Mannitol-1-phosphate 5-dehydrogenase (388 aa).

NAD(+) is bound at residue 5–16; the sequence is AIQFGGGNIGRG. Lys-213 is a catalytic residue.

Belongs to the mannitol dehydrogenase family. In terms of assembly, monomer.

The catalysed reaction is D-mannitol 1-phosphate + NAD(+) = beta-D-fructose 6-phosphate + NADH + H(+). In terms of biological role, catalyzes the NAD(H)-dependent interconversion of D-fructose 6-phosphate and D-mannitol 1-phosphate in the mannitol metabolic pathway. Has a strong preference for NADH over NADPH. Required for protection of conidiospores against exogenous stresses such as high temperatures and an oxidative environment. The protein is Mannitol-1-phosphate 5-dehydrogenase (mpdA) of Aspergillus niger.